A 265-amino-acid chain; its full sequence is 1-(5-phosphoribosyl)-5-[(5-phosphoribosylamino)methylideneamino] imidazole-4-carboxamide isomerase (265 aa).

The Proton acceptor role is filled by Asp8. The active-site Proton donor is Asp139.

This sequence belongs to the HisA/HisF family.

Its subcellular location is the cytoplasm. The enzyme catalyses 1-(5-phospho-beta-D-ribosyl)-5-[(5-phospho-beta-D-ribosylamino)methylideneamino]imidazole-4-carboxamide = 5-[(5-phospho-1-deoxy-D-ribulos-1-ylimino)methylamino]-1-(5-phospho-beta-D-ribosyl)imidazole-4-carboxamide. Its pathway is amino-acid biosynthesis; L-histidine biosynthesis; L-histidine from 5-phospho-alpha-D-ribose 1-diphosphate: step 4/9. In Herminiimonas arsenicoxydans, this protein is 1-(5-phosphoribosyl)-5-[(5-phosphoribosylamino)methylideneamino] imidazole-4-carboxamide isomerase.